Consider the following 201-residue polypeptide: Large ribosomal subunit protein uL4 (201 aa).

Residues 42-67 (GNSAQKTRSEVSGGGKKPWNQKGTGR) are disordered.

This sequence belongs to the universal ribosomal protein uL4 family. Part of the 50S ribosomal subunit.

One of the primary rRNA binding proteins, this protein initially binds near the 5'-end of the 23S rRNA. It is important during the early stages of 50S assembly. It makes multiple contacts with different domains of the 23S rRNA in the assembled 50S subunit and ribosome. Its function is as follows. Forms part of the polypeptide exit tunnel. This Legionella pneumophila (strain Corby) protein is Large ribosomal subunit protein uL4.